Reading from the N-terminus, the 143-residue chain is MELNSIKPAEGAKHAKRRVGRGIGSGLGKTAGRGHKGQKSRSGGYHKVGFEGGQMPLQRRLPKRGFKSHLLKFNAEVTLSTLEQLGLAEVDLAALKSAGVVGQLAKVVKVIKSGELTKAVKLNGIGATAGAKAAIEAAGGSLA.

The disordered stretch occupies residues 1–54; the sequence is MELNSIKPAEGAKHAKRRVGRGIGSGLGKTAGRGHKGQKSRSGGYHKVGFEGGQ. A compositionally biased stretch (gly residues) spans 21 to 31; it reads RGIGSGLGKTA.

Belongs to the universal ribosomal protein uL15 family. Part of the 50S ribosomal subunit.

Binds to the 23S rRNA. This is Large ribosomal subunit protein uL15 from Paracidovorax citrulli (strain AAC00-1) (Acidovorax citrulli).